The sequence spans 88 residues: Small integral membrane protein 13 (88 aa).

Residues Leu10–Val30 traverse the membrane as a helical segment. Residues Thr48 to Gly60 are compositionally biased toward polar residues. The segment at Thr48–His88 is disordered. Phosphoserine occurs at positions 59, 61, and 70. Positions His72–Arg81 are enriched in basic residues.

Belongs to the SMIM13 family.

It is found in the membrane. The sequence is that of Small integral membrane protein 13 (Smim13) from Rattus norvegicus (Rat).